Reading from the N-terminus, the 129-residue chain is Small ribosomal subunit protein uS11 (129 aa).

This sequence belongs to the universal ribosomal protein uS11 family. As to quaternary structure, part of the 30S ribosomal subunit. Interacts with proteins S7 and S18. Binds to IF-3.

Located on the platform of the 30S subunit, it bridges several disparate RNA helices of the 16S rRNA. Forms part of the Shine-Dalgarno cleft in the 70S ribosome. In Bacillus cytotoxicus (strain DSM 22905 / CIP 110041 / 391-98 / NVH 391-98), this protein is Small ribosomal subunit protein uS11.